We begin with the raw amino-acid sequence, 86 residues long: Acyl carrier protein (86 aa).

In terms of domain architecture, Carrier spans 10–85 (DKIEQKVIEM…DVIKYIKERQ (76 aa)). Residue Ser45 is modified to O-(pantetheine 4'-phosphoryl)serine.

It belongs to the acyl carrier protein (ACP) family. Post-translationally, 4'-phosphopantetheine is transferred from CoA to a specific serine of apo-ACP by AcpS. This modification is essential for activity because fatty acids are bound in thioester linkage to the sulfhydryl of the prosthetic group.

The protein localises to the cytoplasm. Its pathway is lipid metabolism; fatty acid biosynthesis. Carrier of the growing fatty acid chain in fatty acid biosynthesis. The chain is Acyl carrier protein from Rickettsia prowazekii (strain Madrid E).